We begin with the raw amino-acid sequence, 1014 residues long: Isoleucine--tRNA ligase (1014 aa).

The 'HIGH' region motif lies at 48–58; the sequence is PTANGRPGIHH. A 'KMSKS' region motif is present at residues 628 to 632; it reads KMSKS. Lys-631 provides a ligand contact to ATP.

Belongs to the class-I aminoacyl-tRNA synthetase family. IleS type 2 subfamily. As to quaternary structure, monomer. It depends on Zn(2+) as a cofactor.

The protein resides in the cytoplasm. The enzyme catalyses tRNA(Ile) + L-isoleucine + ATP = L-isoleucyl-tRNA(Ile) + AMP + diphosphate. Functionally, catalyzes the attachment of isoleucine to tRNA(Ile). As IleRS can inadvertently accommodate and process structurally similar amino acids such as valine, to avoid such errors it has two additional distinct tRNA(Ile)-dependent editing activities. One activity is designated as 'pretransfer' editing and involves the hydrolysis of activated Val-AMP. The other activity is designated 'posttransfer' editing and involves deacylation of mischarged Val-tRNA(Ile). The sequence is that of Isoleucine--tRNA ligase from Dehalococcoides mccartyi (strain CBDB1).